We begin with the raw amino-acid sequence, 306 residues long: Ribosomal protein L11 methyltransferase (306 aa).

Residues T154, G179, D201, and N242 each coordinate S-adenosyl-L-methionine.

This sequence belongs to the methyltransferase superfamily. PrmA family.

It is found in the cytoplasm. The enzyme catalyses L-lysyl-[protein] + 3 S-adenosyl-L-methionine = N(6),N(6),N(6)-trimethyl-L-lysyl-[protein] + 3 S-adenosyl-L-homocysteine + 3 H(+). Functionally, methylates ribosomal protein L11. This chain is Ribosomal protein L11 methyltransferase, found in Stenotrophomonas maltophilia (strain R551-3).